Consider the following 457-residue polypeptide: Siroheme synthase (457 aa).

The tract at residues 1 to 204 (MDHLPIFCQL…ADEKAVNATT (204 aa)) is precorrin-2 dehydrogenase /sirohydrochlorin ferrochelatase. Residues 22 to 23 (DV) and 43 to 44 (LT) each bind NAD(+). S128 carries the post-translational modification Phosphoserine. The uroporphyrinogen-III C-methyltransferase stretch occupies residues 216–457 (GEVVLVGAGP…RDKLNWFSNY (242 aa)). Residue P225 coordinates S-adenosyl-L-methionine. The active-site Proton acceptor is the D248. The active-site Proton donor is the K270. Residues 301 to 303 (GGD), I306, 331 to 332 (TA), M382, and G411 each bind S-adenosyl-L-methionine.

This sequence in the N-terminal section; belongs to the precorrin-2 dehydrogenase / sirohydrochlorin ferrochelatase family. The protein in the C-terminal section; belongs to the precorrin methyltransferase family.

It catalyses the reaction uroporphyrinogen III + 2 S-adenosyl-L-methionine = precorrin-2 + 2 S-adenosyl-L-homocysteine + H(+). It carries out the reaction precorrin-2 + NAD(+) = sirohydrochlorin + NADH + 2 H(+). The catalysed reaction is siroheme + 2 H(+) = sirohydrochlorin + Fe(2+). The protein operates within cofactor biosynthesis; adenosylcobalamin biosynthesis; precorrin-2 from uroporphyrinogen III: step 1/1. It participates in cofactor biosynthesis; adenosylcobalamin biosynthesis; sirohydrochlorin from precorrin-2: step 1/1. Its pathway is porphyrin-containing compound metabolism; siroheme biosynthesis; precorrin-2 from uroporphyrinogen III: step 1/1. It functions in the pathway porphyrin-containing compound metabolism; siroheme biosynthesis; siroheme from sirohydrochlorin: step 1/1. The protein operates within porphyrin-containing compound metabolism; siroheme biosynthesis; sirohydrochlorin from precorrin-2: step 1/1. Functionally, multifunctional enzyme that catalyzes the SAM-dependent methylations of uroporphyrinogen III at position C-2 and C-7 to form precorrin-2 via precorrin-1. Then it catalyzes the NAD-dependent ring dehydrogenation of precorrin-2 to yield sirohydrochlorin. Finally, it catalyzes the ferrochelation of sirohydrochlorin to yield siroheme. This is Siroheme synthase from Salmonella heidelberg (strain SL476).